Consider the following 227-residue polypeptide: Indole-3-glycerol phosphate synthase (227 aa).

It belongs to the TrpC family.

The catalysed reaction is 1-(2-carboxyphenylamino)-1-deoxy-D-ribulose 5-phosphate + H(+) = (1S,2R)-1-C-(indol-3-yl)glycerol 3-phosphate + CO2 + H2O. It functions in the pathway amino-acid biosynthesis; L-tryptophan biosynthesis; L-tryptophan from chorismate: step 4/5. The chain is Indole-3-glycerol phosphate synthase (trpC) from Thermococcus kodakarensis (strain ATCC BAA-918 / JCM 12380 / KOD1) (Pyrococcus kodakaraensis (strain KOD1)).